Consider the following 272-residue polypeptide: Tryptophan synthase alpha chain (272 aa).

Active-site proton acceptor residues include Glu-49 and Asp-60.

The protein belongs to the TrpA family. As to quaternary structure, tetramer of two alpha and two beta chains.

The catalysed reaction is (1S,2R)-1-C-(indol-3-yl)glycerol 3-phosphate + L-serine = D-glyceraldehyde 3-phosphate + L-tryptophan + H2O. It functions in the pathway amino-acid biosynthesis; L-tryptophan biosynthesis; L-tryptophan from chorismate: step 5/5. Functionally, the alpha subunit is responsible for the aldol cleavage of indoleglycerol phosphate to indole and glyceraldehyde 3-phosphate. The sequence is that of Tryptophan synthase alpha chain from Acidithiobacillus ferrooxidans (strain ATCC 23270 / DSM 14882 / CIP 104768 / NCIMB 8455) (Ferrobacillus ferrooxidans (strain ATCC 23270)).